Reading from the N-terminus, the 396-residue chain is Small ribosomal subunit protein uS9m (396 aa).

A disordered region spans residues 374 to 396; the sequence is PRVRERKKPGQEGARRKFTWKKR.

This sequence belongs to the universal ribosomal protein uS9 family. In terms of assembly, component of the mitochondrial ribosome small subunit (28S) which comprises a 12S rRNA and about 30 distinct proteins.

It is found in the mitochondrion. In Bos taurus (Bovine), this protein is Small ribosomal subunit protein uS9m (MRPS9).